We begin with the raw amino-acid sequence, 198 residues long: Syndecan-4 (198 aa).

Positions 1 to 23 (MAPACLLAPLLLLLLGGFPLVPG) are cleaved as a signal peptide. Residues 24–145 (ESIRETEVID…QGSNIFERTE (122 aa)) lie on the Extracellular side of the membrane. Disordered regions lie at residues 42–76 (YFSGALPDDEDAGGSDDFELSGSGDLDDTEEPRPF) and 94–130 (AQPGIRVPSEPKELEENEVIPKRAPSDVGDDMSNKVS). Serine 44, serine 62, and serine 64 each carry an O-linked (Xyl...) (glycosaminoglycan) serine glycan. The segment covering 48–71 (PDDEDAGGSDDFELSGSGDLDDTE) has biased composition (acidic residues). Positions 102 to 118 (SEPKELEENEVIPKRAP) are enriched in basic and acidic residues. A helical membrane pass occupies residues 146–170 (VLAALIVGGVVGILFAVFLILLLVY). Topologically, residues 171 to 198 (RMKKKDEGSYDLGKKPIYKKAPTNEFYA) are cytoplasmic.

The protein belongs to the syndecan proteoglycan family. As to quaternary structure, homodimer. Interacts with CDCP1 and SDCBP. Interacts (via its cytoplasmic domain) with GIPC (via its PDZ domain). Interacts (via its cytoplasmic domain) with NUDT16L1. Interacts with DNM2; this interaction is markedly enhanced at focal ahesion site upon induction of focal adhesions and stress-fiber formation. Post-translationally, shedding is enhanced by a number of factors such as heparanase, thrombin or EGF. Also by stress and wound healing. PMA-mediated shedding is inhibited by TIMP3. In terms of processing, O-glycosylated; contains both chondroitin sulfate and heparan sulfate. Ser-44, Ser-62 and Ser-64 can all be modified by either chondroitin sulfate or heparan sulfate, and the protein exists in forms that contain only chondroitin sulfate, only heparan sulfate and both chondroitin sulfate and heparan sulfate. In terms of tissue distribution, ubiquitous. Highest levels in liver, kidney and lung.

Its subcellular location is the membrane. It localises to the secreted. Its function is as follows. Cell surface proteoglycan which regulates exosome biogenesis in concert with SDCBP and PDCD6IP. The protein is Syndecan-4 of Mus musculus (Mouse).